The sequence spans 396 residues: NADH-ubiquinone oxidoreductase 49 kDa subunit (396 aa).

Belongs to the complex I 49 kDa subunit family.

It localises to the mitochondrion. The enzyme catalyses a ubiquinone + NADH + 5 H(+)(in) = a ubiquinol + NAD(+) + 4 H(+)(out). Functionally, core subunit of the mitochondrial membrane respiratory chain NADH dehydrogenase (Complex I) that is believed to belong to the minimal assembly required for catalysis. Complex I functions in the transfer of electrons from NADH to the respiratory chain. The immediate electron acceptor for the enzyme is believed to be ubiquinone. Component of the iron-sulfur (IP) fragment of the enzyme. Component of the iron-sulfur (IP) fragment of the enzyme. The sequence is that of NADH-ubiquinone oxidoreductase 49 kDa subunit (NAD7) from Reclinomonas americana.